The sequence spans 382 residues: Histidinol-phosphate aminotransferase (382 aa).

The tract at residues 1–28 (MTSAPRPRPTLDDLPLREDLRGKSPYGA) is disordered. Positions 9–22 (PTLDDLPLREDLRG) are enriched in basic and acidic residues. At lysine 233 the chain carries N6-(pyridoxal phosphate)lysine.

This sequence belongs to the class-II pyridoxal-phosphate-dependent aminotransferase family. Histidinol-phosphate aminotransferase subfamily. Homodimer. The cofactor is pyridoxal 5'-phosphate.

The enzyme catalyses L-histidinol phosphate + 2-oxoglutarate = 3-(imidazol-4-yl)-2-oxopropyl phosphate + L-glutamate. Its pathway is amino-acid biosynthesis; L-histidine biosynthesis; L-histidine from 5-phospho-alpha-D-ribose 1-diphosphate: step 7/9. This is Histidinol-phosphate aminotransferase from Mycobacterium marinum (strain ATCC BAA-535 / M).